A 371-amino-acid chain; its full sequence is 4-hydroxyphenylpyruvate dioxygenase-like protein (371 aa).

VOC domains follow at residues 7–135 (RLCH…LLQR) and 160–328 (HVDH…VFTK). 3 residues coordinate Fe cation: histidine 163, histidine 258, and glutamate 339.

The protein belongs to the 4HPPD family. It depends on Fe cation as a cofactor.

The protein localises to the mitochondrion. It carries out the reaction 3-(4-hydroxyphenyl)pyruvate + O2 = (S)-4-hydroxymandelate + CO2. Its function is as follows. Iron-dependent dioxygenase that catalyzes the conversion of 4-hydroxyphenylpyruvate (4-HPPA) to 4-hydroxymandelate (4-HMA) in the mitochondria, one of the steps in the biosynthesis of coenzyme Q10 from tyrosine. The sequence is that of 4-hydroxyphenylpyruvate dioxygenase-like protein from Mus musculus (Mouse).